A 531-amino-acid chain; its full sequence is Tyrosine 2,3-aminomutase (531 aa).

Tyrosine 51 (proton donor/acceptor) is an active-site residue. Substrate is bound at residue histidine 81. The segment at residues 140-142 (ASG) is a cross-link (5-imidazolinone (Ala-Gly)). At serine 141 the chain carries 2,3-didehydroalanine (Ser). Residues asparagine 193 and arginine 298 each contribute to the substrate site.

The protein belongs to the TAL/TAM family. As to quaternary structure, homotetramer; dimer of dimers. In terms of processing, contains an active site 4-methylidene-imidazol-5-one (MIO), which is formed autocatalytically by cyclization and dehydration of residues Ala-Ser-Gly.

The catalysed reaction is L-tyrosine = 3-amino-3-(4-hydroxyphenyl)propanoate. It carries out the reaction L-tyrosine = (E)-4-coumarate + NH4(+). Functionally, has aminomutase and, to a lesser extent, ammonia-lyase activity. Primarily, catalyzes the rearrangement of L-tyrosine to R-beta-tyrosine, which is incorporated into secondary metabolites called chondramides. The aminomutase activity mainly produces R-beta-tyrosine but also S-beta tyrosine in smaller amounts. Does not accept D-tyrosine, L-histidine or L-phenylalanine as substrates. The protein is Tyrosine 2,3-aminomutase of Chondromyces crocatus.